The following is a 600-amino-acid chain: Cytidine monophosphate-N-acetylneuraminic acid hydroxylase (600 aa).

Residues 9–107 form the Rieske domain; sequence LSPVEVASLK…VEMDENNRLL (99 aa). Cys-49, His-51, Cys-70, and His-73 together coordinate [2Fe-2S] cluster.

It belongs to the CMP-Neu5Ac hydroxylase family. [2Fe-2S] cluster is required as a cofactor.

It localises to the cytoplasm. It carries out the reaction CMP-N-acetyl-beta-neuraminate + 2 Fe(II)-[cytochrome b5] + O2 + 2 H(+) = CMP-N-glycoloyl-beta-neuraminate + 2 Fe(III)-[cytochrome b5] + H2O. It functions in the pathway amino-sugar metabolism; N-acetylneuraminate metabolism. Sialic acids are components of carbohydrate chains of glycoconjugates and are involved in cell-cell recognition and cell-pathogen interactions. Catalyzes the conversion of CMP-N-acetylneuraminic acid (CMP-Neu5Ac) into its hydroxylated derivative CMP-N-glycolylneuraminic acid (CMP-Neu5Gc), a sialic acid abundantly expressed at the surface of many cells. The polypeptide is Cytidine monophosphate-N-acetylneuraminic acid hydroxylase (CMAH) (Pan paniscus (Pygmy chimpanzee)).